The sequence spans 121 residues: MIFNIGIDVVEVDRFKDMKRFDEFLKRVFTSCELEYIKQKRYNPETIAGYFAAKEAVAKALSTGVVFCFKDIEIQKGKTGCPMVKLYNRAEALCFELGIKNIVVSISHQKSVAVAVAIAEK.

Mg(2+) contacts are provided by Asp8 and Glu55.

Belongs to the P-Pant transferase superfamily. AcpS family. Mg(2+) is required as a cofactor.

It is found in the cytoplasm. It catalyses the reaction apo-[ACP] + CoA = holo-[ACP] + adenosine 3',5'-bisphosphate + H(+). Transfers the 4'-phosphopantetheine moiety from coenzyme A to a Ser of acyl-carrier-protein. The polypeptide is Holo-[acyl-carrier-protein] synthase (Caldicellulosiruptor bescii (strain ATCC BAA-1888 / DSM 6725 / KCTC 15123 / Z-1320) (Anaerocellum thermophilum)).